A 676-amino-acid chain; its full sequence is MTLEEARKRVNELRDLIRYHNYRYYVLADPEISDAEYDRLLRELKELEERFPELKSPDSPTLQVGARPLEATFRPVRHPTRMYSLDNAFNLDELKAFEERIERALGRKGPFAYTVEHKVDGLSVNLYYEEGVLVYGATRGDGEVGEEVTQNLLTIPTIPRRLKGVPERLEVRGEVYMPIEAFLRLNEELEERGERIFKNPRNAAAGSLRQKDPRITAKRGLRATFYALGLGLEEVEREGVATQFALLHWLKEKGFPVEHGYARAVGAEGVEAVYQDWLKKRRALPFEADGVVVKLDELALWRELGYTARAPRFAIAYKFPAEEKETRLLDVVFQVGRTGRVTPVGILEPVFLEGSEVSRVTLHNESYIEELDIRIGDWVLVHKAGGVIPEVLRVLKERRTGEERPIRWPETCPECGHRLLKEGKVHRCPNPLCPAKRFEAIRHFASRKAMDIQGLGEKLIERLLEKGLVKDVADLYRLRKEDLVGLERMGEKSAQNLLRQIEESKKRGLERLLYALGLPGVGEVLARNLAARFGNMDRLLEASLEELLEVEEVGELTARAILETLKDPAFRDLVRRLKEAGVEMEAKEKGGEALKGLTFVITGELSRPREEVKALLRRLGAKVTDSVSRKTSYLVVGENPGSKLEKARALGVPTLTEEELYRLLEARTGKKAEELV.

Residues 34-38 (DAEYD), 84-85 (SL), and Glu-116 each bind NAD(+). Lys-118 acts as the N6-AMP-lysine intermediate in catalysis. NAD(+) contacts are provided by Arg-139, Glu-174, Lys-294, and Lys-318. Zn(2+) is bound by residues Cys-412, Cys-415, Cys-428, and Cys-433. Positions 589–676 (KGGEALKGLT…RTGKKAEELV (88 aa)) constitute a BRCT domain.

Belongs to the NAD-dependent DNA ligase family. LigA subfamily. Mg(2+) is required as a cofactor. The cofactor is Mn(2+).

The enzyme catalyses NAD(+) + (deoxyribonucleotide)n-3'-hydroxyl + 5'-phospho-(deoxyribonucleotide)m = (deoxyribonucleotide)n+m + AMP + beta-nicotinamide D-nucleotide.. Its function is as follows. DNA ligase that catalyzes the formation of phosphodiester linkages between 5'-phosphoryl and 3'-hydroxyl groups in double-stranded DNA using NAD as a coenzyme and as the energy source for the reaction. It is essential for DNA replication and repair of damaged DNA. This is DNA ligase from Thermus thermophilus (strain ATCC 27634 / DSM 579 / HB8).